A 706-amino-acid chain; its full sequence is Probable protein S-acyltransferase 20 (706 aa).

2 helical membrane-spanning segments follow: residues 16-36 and 41-61; these read VIAI…FAPF and IWEY…FVLY. Residues 172–222 enclose the DHHC domain; the sequence is LFCTLCNCEVRKFSKHCRSCDKCVDCFDHHCKWLNNCVGRKNYVTFVSLMS. Residue cysteine 202 is the S-palmitoyl cysteine intermediate of the active site. A run of 2 helical transmembrane segments spans residues 220-240 and 275-295; these read LMSA…AVIV and AVAI…MLLI. Disordered regions lie at residues 470–505, 591–621, and 680–706; these read SSLS…HVHE, LNPS…ALRD, and RDST…SNIK. 3 stretches are compositionally biased toward polar residues: residues 492 to 501, 591 to 603, and 697 to 706; these read HGMSNLSSPS, LNPS…TQNP, and ANSQTGSNIK.

It belongs to the DHHC palmitoyltransferase family.

The protein resides in the cell membrane. It localises to the cytoplasmic vesicle membrane. The catalysed reaction is L-cysteinyl-[protein] + hexadecanoyl-CoA = S-hexadecanoyl-L-cysteinyl-[protein] + CoA. Functionally, palmitoyl acyltransferase. This is Probable protein S-acyltransferase 20 (PAT20) from Arabidopsis thaliana (Mouse-ear cress).